Reading from the N-terminus, the 302-residue chain is Uricase (302 aa).

Active-site charge relay system residues include K22 and T67. Residues T67, D68, F163, R180, Q223, and N249 each coordinate urate. H251 acts as the Charge relay system in catalysis.

The protein belongs to the uricase family. As to quaternary structure, homotetramer.

The catalysed reaction is urate + O2 + H2O = 5-hydroxyisourate + H2O2. It participates in purine metabolism; urate degradation; (S)-allantoin from urate: step 1/3. In terms of biological role, catalyzes the oxidation of uric acid to 5-hydroxyisourate, which is further processed to form (S)-allantoin. The protein is Uricase (uox) of Arthrobacter globiformis.